Here is a 159-residue protein sequence, read N- to C-terminus: MPELKIKTEKVEKQLTKEPLVLKTPKEQIDNLGKFYATGKRKNAIARVWLKVGKGKIVVNNKTIAQYFPSETYVKTILQPFVLTKTIDQYDIICTVRGGGISGQKGAILHGISKALDKSAPDFHAILRKGGLLTRDSRVVERKKYGQRKARKKTQFSKR.

It belongs to the universal ribosomal protein uS9 family.

This is Small ribosomal subunit protein uS9 from Rickettsia conorii (strain ATCC VR-613 / Malish 7).